The following is a 235-amino-acid chain: BPI fold-containing family A member 2 (235 aa).

The N-terminal stretch at 1–20 is a signal peptide; that stretch reads MFQLGSLVVLCGLLIGNSES. Cysteines 161 and 204 form a disulfide.

This sequence belongs to the BPI/LBP/Plunc superfamily. Plunc family. In terms of tissue distribution, predominates in the parotid glands, present in smaller amounts (1/10) in the submaxillary glands and in the sublingual glands, and at lower amount in the pancreas but undetectable in the liver. Found also in lacrimal gland.

Its subcellular location is the secreted. Has strong antibacterial activity against P.aeruginosa. This Mus musculus (Mouse) protein is BPI fold-containing family A member 2 (Bpifa2).